The chain runs to 309 residues: Hydroxyacylglutathione hydrolase, mitochondrial (309 aa).

The transit peptide at 1–24 (MVLGRGSLCLRSLSVLGAACARRG) directs the protein to the mitochondrion. Lys-90 is subject to N6-acetyllysine. Zn(2+)-binding residues include His-103, His-105, Asp-107, and His-108. Lys-117 is subject to N6-acetyllysine. Zn(2+) is bound by residues His-159 and Asp-183. Residues 192–194 (KFY) and 222–224 (HEY) contribute to the substrate site. Residue His-222 participates in Zn(2+) binding. Position 230 is an N6-acetyllysine; alternate (Lys-230). Position 230 is an N6-succinyllysine; alternate (Lys-230). Position 298–301 (298–301 (RREK)) interacts with substrate.

This sequence belongs to the metallo-beta-lactamase superfamily. Glyoxalase II family. Monomer. The cofactor is Zn(2+). In terms of tissue distribution, strongly expressed in testis, skeletal muscle and heart. Weakly expressed in placenta, pancreas, spleen and peripheral blood leukocytes.

It is found in the mitochondrion matrix. The protein localises to the cytoplasm. It carries out the reaction an S-(2-hydroxyacyl)glutathione + H2O = a 2-hydroxy carboxylate + glutathione + H(+). The enzyme catalyses (R)-S-lactoylglutathione + H2O = (R)-lactate + glutathione + H(+). It functions in the pathway secondary metabolite metabolism; methylglyoxal degradation; (R)-lactate from methylglyoxal: step 2/2. Thiolesterase that catalyzes the hydrolysis of S-D-lactoyl-glutathione to form glutathione and D-lactic acid. This chain is Hydroxyacylglutathione hydrolase, mitochondrial (Hagh), found in Rattus norvegicus (Rat).